Reading from the N-terminus, the 100-residue chain is Small ribosomal subunit protein uS14 (100 aa).

Positions 63, 66, 79, and 82 each coordinate Zn(2+).

This sequence belongs to the universal ribosomal protein uS14 family. As to quaternary structure, part of the 30S ribosomal subunit. Contacts proteins S3 and S10. Requires Zn(2+) as cofactor.

Functionally, binds 16S rRNA, required for the assembly of 30S particles and may also be responsible for determining the conformation of the 16S rRNA at the A site. The polypeptide is Small ribosomal subunit protein uS14 (rpsN) (Legionella pneumophila (strain Paris)).